We begin with the raw amino-acid sequence, 90 residues long: Elongation factor 1-beta (90 aa).

Belongs to the EF-1-beta/EF-1-delta family.

Promotes the exchange of GDP for GTP in EF-1-alpha/GDP, thus allowing the regeneration of EF-1-alpha/GTP that could then be used to form the ternary complex EF-1-alpha/GTP/AAtRNA. This Desulfurococcus amylolyticus (strain DSM 18924 / JCM 16383 / VKM B-2413 / 1221n) (Desulfurococcus kamchatkensis) protein is Elongation factor 1-beta.